The following is a 189-amino-acid chain: uncharacterized protein (189 aa).

The Macro domain occupies 1–174 (MKCWTLGDRV…GMEKGVREAL (174 aa)).

This is an uncharacterized protein from Aeropyrum pernix (strain ATCC 700893 / DSM 11879 / JCM 9820 / NBRC 100138 / K1).